The chain runs to 397 residues: Serpin B10 (397 aa).

A Nuclear localization signal motif is present at residues 74 to 77 (KKRK).

The protein belongs to the serpin family. Ov-serpin subfamily.

The protein localises to the nucleus. It localises to the cytoplasm. Its function is as follows. Protease inhibitor that may play a role in the regulation of protease activities during hematopoiesis and apoptosis induced by TNF. May regulate protease activities in the cytoplasm and in the nucleus. This chain is Serpin B10 (SERPINB10), found in Otolemur garnettii (Small-eared galago).